Reading from the N-terminus, the 613-residue chain is Kelch-like protein 36 (613 aa).

One can recognise a BTB domain in the interval 45–112 (CDVVLVVEEQ…LYSSELELDG (68 aa)). In terms of domain architecture, BACK spans 147–249 (YLYLQELASI…PEDILLQRVK (103 aa)). Kelch repeat units follow at residues 294–343 (CLLF…VLGG), 344–395 (FIFI…SIED), 396–442 (MLVA…IYKD), 444–491 (VYIS…SLGD), 492–544 (SIYS…VWQG), and 545–593 (RIYI…VCAL).

In terms of assembly, interacts with CUL3.

Its pathway is protein modification; protein ubiquitination. In terms of biological role, probable substrate-specific adapter of an E3 ubiquitin-protein ligase complex which mediates the ubiquitination and subsequent proteasomal degradation of target proteins. The polypeptide is Kelch-like protein 36 (Klhl36) (Mus musculus (Mouse)).